A 211-amino-acid polypeptide reads, in one-letter code: Peptide methionine sulfoxide reductase MsrA (211 aa).

Residue C52 is part of the active site.

It belongs to the MsrA Met sulfoxide reductase family.

The catalysed reaction is L-methionyl-[protein] + [thioredoxin]-disulfide + H2O = L-methionyl-(S)-S-oxide-[protein] + [thioredoxin]-dithiol. It catalyses the reaction [thioredoxin]-disulfide + L-methionine + H2O = L-methionine (S)-S-oxide + [thioredoxin]-dithiol. In terms of biological role, has an important function as a repair enzyme for proteins that have been inactivated by oxidation. Catalyzes the reversible oxidation-reduction of methionine sulfoxide in proteins to methionine. This chain is Peptide methionine sulfoxide reductase MsrA, found in Photobacterium profundum (strain SS9).